Reading from the N-terminus, the 689-residue chain is Methionine--tRNA ligase (689 aa).

The 'HIGH' region signature appears at 13–23 (PYANGNFHIGH). 4 residues coordinate Zn(2+): Cys-144, Cys-147, Cys-157, and Cys-160. Residues 341-345 (KMSKS) carry the 'KMSKS' region motif. Lys-344 contributes to the ATP binding site. The tRNA-binding domain occupies 583–689 (DFAKVDLRIA…PGASPGLRVR (107 aa)).

Belongs to the class-I aminoacyl-tRNA synthetase family. MetG type 1 subfamily. In terms of assembly, homodimer. The cofactor is Zn(2+).

The protein localises to the cytoplasm. The enzyme catalyses tRNA(Met) + L-methionine + ATP = L-methionyl-tRNA(Met) + AMP + diphosphate. Functionally, is required not only for elongation of protein synthesis but also for the initiation of all mRNA translation through initiator tRNA(fMet) aminoacylation. In Polaromonas sp. (strain JS666 / ATCC BAA-500), this protein is Methionine--tRNA ligase.